The chain runs to 253 residues: MILVIDVGNTNIVLGVYDEQTLLQHWRIATDRTRTTDEYGMLVKALFRDAELNVEDIEGIVLSSVVPPVVFPLENMCVRYFNRRPFVIGPGIKTGLDLKVDNPREVGADRIVNAVAATVKYDGPLIIVDFGTATTYCYIDAQKRYYGGIISPGVMVSTEALYNKAAKLPRIEIAKPQSTIGRNTVHAMQSGTYFGYVAQVDGLVHRMKEEMGEATVIATGGLARLISEESATIKIVDPFLTLDGLRIIYERNK.

6–13 (DVGNTNIV) contributes to the ATP binding site. Position 107–110 (107–110 (GADR)) interacts with substrate. Asp109 serves as the catalytic Proton acceptor. Asp129 lines the K(+) pocket. Residue Thr132 coordinates ATP. Residue Thr184 coordinates substrate.

Belongs to the type III pantothenate kinase family. In terms of assembly, homodimer. Requires NH4(+) as cofactor. The cofactor is K(+).

The protein resides in the cytoplasm. It carries out the reaction (R)-pantothenate + ATP = (R)-4'-phosphopantothenate + ADP + H(+). Its pathway is cofactor biosynthesis; coenzyme A biosynthesis; CoA from (R)-pantothenate: step 1/5. In terms of biological role, catalyzes the phosphorylation of pantothenate (Pan), the first step in CoA biosynthesis. The protein is Type III pantothenate kinase of Exiguobacterium sibiricum (strain DSM 17290 / CCUG 55495 / CIP 109462 / JCM 13490 / 255-15).